The following is a 240-amino-acid chain: Lipoprotein signal peptidase (240 aa).

4 helical membrane passes run Leu38 to Leu58, Leu73 to Leu93, Pro98 to Phe118, and Ser120 to Ile140. Catalysis depends on residues Asp162 and Asp179. The chain crosses the membrane as a helical span at residues Phe177 to Phe197.

It belongs to the peptidase A8 family.

The protein localises to the cell membrane. It carries out the reaction Release of signal peptides from bacterial membrane prolipoproteins. Hydrolyzes -Xaa-Yaa-Zaa-|-(S,diacylglyceryl)Cys-, in which Xaa is hydrophobic (preferably Leu), and Yaa (Ala or Ser) and Zaa (Gly or Ala) have small, neutral side chains.. Its pathway is protein modification; lipoprotein biosynthesis (signal peptide cleavage). In terms of biological role, this protein specifically catalyzes the removal of signal peptides from prolipoproteins. The protein is Lipoprotein signal peptidase of Malacoplasma penetrans (strain HF-2) (Mycoplasma penetrans).